A 645-amino-acid polypeptide reads, in one-letter code: 1,4-alpha-glucan branching enzyme GlgB (645 aa).

Asp309 functions as the Nucleophile in the catalytic mechanism. The active-site Proton donor is the Glu352. The disordered stretch occupies residues 619 to 645 (VKTRKGSKKQDGSKTKVRSNVTSRGKR). Polar residues predominate over residues 636–645 (RSNVTSRGKR).

The protein belongs to the glycosyl hydrolase 13 family. GlgB subfamily. Monomer.

It carries out the reaction Transfers a segment of a (1-&gt;4)-alpha-D-glucan chain to a primary hydroxy group in a similar glucan chain.. The protein operates within glycan biosynthesis; glycogen biosynthesis. Functionally, catalyzes the formation of the alpha-1,6-glucosidic linkages in glycogen by scission of a 1,4-alpha-linked oligosaccharide from growing alpha-1,4-glucan chains and the subsequent attachment of the oligosaccharide to the alpha-1,6 position. This chain is 1,4-alpha-glucan branching enzyme GlgB, found in Bacillus mycoides (strain KBAB4) (Bacillus weihenstephanensis).